Consider the following 130-residue polypeptide: Sigma-w pathway protein YsdB (130 aa).

The helical transmembrane segment at 2-22 threads the bilayer; it reads FVMVLRIILLALFAYCIYAVV.

It localises to the membrane. Functionally, may mediate a negative feedback loop that down-regulates the expression of the sigma-W regulon following the activation of sigma-W in response to conditions of cell envelope stress. Might interact with and inhibit the activity of the protease PrsW, or could bind to the anti-sigma-W factor RsiW and thereby protect it from PrsW-mediated cleavage. This is Sigma-w pathway protein YsdB (ysdB) from Bacillus subtilis (strain 168).